The primary structure comprises 288 residues: Ribosomal protein L11 methyltransferase (288 aa).

S-adenosyl-L-methionine contacts are provided by Thr134, Gly157, Asp179, and Asn224.

The protein belongs to the methyltransferase superfamily. PrmA family.

Its subcellular location is the cytoplasm. The catalysed reaction is L-lysyl-[protein] + 3 S-adenosyl-L-methionine = N(6),N(6),N(6)-trimethyl-L-lysyl-[protein] + 3 S-adenosyl-L-homocysteine + 3 H(+). In terms of biological role, methylates ribosomal protein L11. This Caulobacter sp. (strain K31) protein is Ribosomal protein L11 methyltransferase.